The sequence spans 1275 residues: MENFILYEEIGRGSKSVVYKGRRKGTINFVAILCTDKCKRPEITNWVRLTHEIKHKNIVTFHEWYETSNHLWLVVELCTGGSLKTVIAQDENLPEDVVREFGIDLISGLHHLHKLGILFCDISPRKILLEGPGTLKFSNFCLAKVEGENLEEFFALVAAEEGGGDSGENVLKKSMKSRVKGSPVYTAPEVVRGAEFSISSDLWSVGCLLYEMFSGKPPFFSESISELTEKILCEDPLPPIPKDSSCPKASSDFTNLLDGLLQRDPQKRLTWTRLLQHSFWKKAFAGADQESSVEDLSLSRNTMECSGPQDSKELLQNSQSRQAKGHKSGQRLGHYFRLENPTEFRPKSTLEGQLNESMFLLSSRPTPRTSTAVEVSPGEDRTHCSPQKTSPLTKITSGRLSQQDLESQMRELIYTDSDLVVTPIIDNPKIMKQPPVKFDPKILHLPAYSVDKLLFLKDQDWNDFLQQVCSQIDSTEKSMGASRAKLNLLCYLCMVAGHQEVATRLLHSPLFKLLIQHLRIAPNWDIRAKVARVIGLLASHTTELQENTPVVEAIVLLTELIRENFRNSKLKQCLLPTLGELIYLVATQEEKKKNPRECWAFPLAAYTVLMRCLREGEERVVNHMAAKIIENVCTTFSAQAQGFITGEIGPILWYLFRHSTADSLRITAVSALCRITRHSPTAFQNVIEKVGLNSVINSLASAICKVQQYMLTLFTAMLSCGVHLQRLIQEKDFVSTIIRLLESPSTYIRAKAFLVLLYILIYNREMLLLSCQARLVMYIERDSRKITPGKEQQSGNEYLSKCLDLLIRHIVQELPRILGDILNSLANVSGRKHPSTVQVKQLKMCLPLMPIVLHLVTSQVFRPQVVTEEFLFSYGTILSHIKSVDSGETNIDGAIGLTASEEFIKITLSAFEAIIQYPILLKDYRSTVVDYILPPLVSLVQSQNVEWRLFSLRLLSETTSLLVNQEFGDGKEKASVDSDSNLLALIRDVLLPQYEHILVEPDPVPAYALKLLVAMTEHNPTFTRLVEESKLIPLIFEVTLEHQESILGNTMQSVIALLNNLVACKDSNMKLLYEQGLVSHICNLLTETATLCLDVDNKNNNEMAAALLFSLLDILHSMLTYTSGIVRLALQTQKSGSGEDIQAAEDLLLLNRPLTDLISLLIPLLPNEDPEIFDVSSKCLSILVQLYGGENPDSLSPENVEIFAHLLTSKEDPKEQKLLLRILRRMITSNEKHLESLKNAGSLLRALERLAPGSGSFADSVVAPLALEILQAVGR.

One can recognise a Protein kinase domain in the interval 4-280; that stretch reads FILYEEIGRG…WTRLLQHSFW (277 aa). The active-site Proton acceptor is the aspartate 121. 2 disordered regions span residues 299–346 and 359–393; these read SRNT…EFRP and FLLS…SPLT. Residues 336–346 are compositionally biased toward basic and acidic residues; the sequence is FRLENPTEFRP. Composition is skewed to polar residues over residues 363–373 and 384–393; these read SRPTPRTSTAV and CSPQKTSPLT. HEAT repeat units follow at residues 727-765, 842-880, 926-964, 1025-1063, 1151-1189, and 1213-1253; these read LIQE…YNRE, LKMC…ILSH, STVV…LLVN, LVEE…NLVA, NRPL…LYGG, and PKEQ…LAPG.

Belongs to the protein kinase superfamily. Ser/Thr protein kinase family. APG1/unc-51/ULK1 subfamily.

It carries out the reaction L-seryl-[protein] + ATP = O-phospho-L-seryl-[protein] + ADP + H(+). The enzyme catalyses L-threonyl-[protein] + ATP = O-phospho-L-threonyl-[protein] + ADP + H(+). Its function is as follows. May be involved in the remodeling of cytoskeletal components, such as alpha-tubulin, and in this way regulates neurite branching and elongation, as well as cell motility. The protein is Serine/threonine-protein kinase ULK4 (ULK4) of Pongo abelii (Sumatran orangutan).